The primary structure comprises 130 residues: Profilin-12 (130 aa).

Cys13 and Cys115 form a disulfide bridge. The Involved in PIP2 interaction motif lies at 81–97; sequence AVIRGKKGSGGITVKKT. A Phosphothreonine modification is found at Thr111.

This sequence belongs to the profilin family. In terms of assembly, occurs in many kinds of cells as a complex with monomeric actin in a 1:1 ratio. In terms of processing, phosphorylated by MAP kinases.

Its subcellular location is the cytoplasm. The protein localises to the cytoskeleton. In terms of biological role, binds to actin and affects the structure of the cytoskeleton. At high concentrations, profilin prevents the polymerization of actin, whereas it enhances it at low concentrations. The sequence is that of Profilin-12 from Zea mays (Maize).